The primary structure comprises 655 residues: Kelch-like protein 13 (655 aa).

The 70-residue stretch at 92 to 161 (CDVTLMPGDT…IYTAKLSLNM (70 aa)) folds into the BTB domain. The region spanning 196–297 (CVEVGRIANT…TPQELINYVQ (102 aa)) is the BACK domain. Kelch repeat units follow at residues 341-389 (HLVT…VIGN), 390-441 (FLYV…ALKG), 442-488 (YLYA…VYGG), 490-535 (MYIS…TVGE), 537-587 (LYVI…VFEN), and 588-636 (KIYV…TLTV).

In terms of assembly, component of the BCR(KLHL9-KLHL13) E3 ubiquitin ligase complex, at least composed of CUL3, KLHL9, KLHL13 and RBX1. Interacts with AURKB.

The protein operates within protein modification; protein ubiquitination. Substrate-specific adapter of a BCR (BTB-CUL3-RBX1) E3 ubiquitin-protein ligase complex required for mitotic progression and cytokinesis. The BCR(KLHL9-KLHL13) E3 ubiquitin ligase complex mediates the ubiquitination of AURKB and controls the dynamic behavior of AURKB on mitotic chromosomes and thereby coordinates faithful mitotic progression and completion of cytokinesis. The sequence is that of Kelch-like protein 13 (KLHL13) from Bos taurus (Bovine).